A 252-amino-acid chain; its full sequence is 5'-nucleotidase SurE (252 aa).

The a divalent metal cation site is built by aspartate 8, aspartate 9, serine 39, and asparagine 96.

This sequence belongs to the SurE nucleotidase family. It depends on a divalent metal cation as a cofactor.

The protein localises to the cytoplasm. The catalysed reaction is a ribonucleoside 5'-phosphate + H2O = a ribonucleoside + phosphate. Its function is as follows. Nucleotidase that shows phosphatase activity on nucleoside 5'-monophosphates. The chain is 5'-nucleotidase SurE from Petrotoga mobilis (strain DSM 10674 / SJ95).